Reading from the N-terminus, the 182-residue chain is PRA1 family protein D (182 aa).

The residue at position 2 (Ala-2) is an N-acetylalanine. 3 helical membrane-spanning segments follow: residues 68–88, 107–127, and 129–149; these read LITR…WFFL, IVAV…GVWL, and ALTT…LRGT. A disordered region spans residues 163 to 182; the sequence is PMLSTSGGGNDGARGDYSGI.

This sequence belongs to the PRA1 family. Interacts with PRA1F2 and PRA1F3. Interacts with the cauliflower mosaic virus (CaMV) movement protein (via N-terminus). As to expression, expressed in hypocotyls, roots, lateral roots, lateral root caps, columella cells, leaves, shoot apex, stems and flowers.

Its subcellular location is the endosome membrane. May be involved in both secretory and endocytic intracellular trafficking in the endosomal/prevacuolar compartments. The chain is PRA1 family protein D (PRA1D) from Arabidopsis thaliana (Mouse-ear cress).